We begin with the raw amino-acid sequence, 327 residues long: ATP-dependent 6-phosphofructokinase (327 aa).

ATP is bound by residues glycine 11, 72-73, and 102-105; these read RS and GDGS. Mg(2+) is bound at residue aspartate 103. 127-129 is a substrate binding site; it reads TID. Aspartate 129 acts as the Proton acceptor in catalysis. Arginine 156 lines the ADP pocket. Residues arginine 164 and 171–173 each bind substrate; that span reads MGR. Residue 187-189 participates in ADP binding; the sequence is GAE. Residues glutamate 224, arginine 245, and 251 to 254 contribute to the substrate site; that span reads HIQR.

This sequence belongs to the phosphofructokinase type A (PFKA) family. ATP-dependent PFK group I subfamily. Prokaryotic clade 'B1' sub-subfamily. In terms of assembly, homotetramer. Mg(2+) serves as cofactor.

It localises to the cytoplasm. The enzyme catalyses beta-D-fructose 6-phosphate + ATP = beta-D-fructose 1,6-bisphosphate + ADP + H(+). The protein operates within carbohydrate degradation; glycolysis; D-glyceraldehyde 3-phosphate and glycerone phosphate from D-glucose: step 3/4. Allosterically activated by ADP and other diphosphonucleosides, and allosterically inhibited by phosphoenolpyruvate. In terms of biological role, catalyzes the phosphorylation of D-fructose 6-phosphate to fructose 1,6-bisphosphate by ATP, the first committing step of glycolysis. The sequence is that of ATP-dependent 6-phosphofructokinase from Sulfurovum sp. (strain NBC37-1).